The primary structure comprises 450 residues: tRNA-2-methylthio-N(6)-dimethylallyladenosine synthase (450 aa).

An MTTase N-terminal domain is found at 2–119; sequence KKVFVKTYGC…LPDLIARRQR (118 aa). Residues Cys-11, Cys-48, Cys-82, Cys-156, Cys-160, and Cys-163 each coordinate [4Fe-4S] cluster. Residues 142–375 form the Radical SAM core domain; the sequence is RVEGPSAFVS…QATIEENVQR (234 aa). The TRAM domain occupies 378–448; the sequence is QGMVGTVQRI…PHSLRGEIVV (71 aa).

This sequence belongs to the methylthiotransferase family. MiaB subfamily. As to quaternary structure, monomer. [4Fe-4S] cluster serves as cofactor.

The protein localises to the cytoplasm. The catalysed reaction is N(6)-dimethylallyladenosine(37) in tRNA + (sulfur carrier)-SH + AH2 + 2 S-adenosyl-L-methionine = 2-methylsulfanyl-N(6)-dimethylallyladenosine(37) in tRNA + (sulfur carrier)-H + 5'-deoxyadenosine + L-methionine + A + S-adenosyl-L-homocysteine + 2 H(+). In terms of biological role, catalyzes the methylthiolation of N6-(dimethylallyl)adenosine (i(6)A), leading to the formation of 2-methylthio-N6-(dimethylallyl)adenosine (ms(2)i(6)A) at position 37 in tRNAs that read codons beginning with uridine. The sequence is that of tRNA-2-methylthio-N(6)-dimethylallyladenosine synthase from Cupriavidus taiwanensis (strain DSM 17343 / BCRC 17206 / CCUG 44338 / CIP 107171 / LMG 19424 / R1) (Ralstonia taiwanensis (strain LMG 19424)).